The sequence spans 515 residues: 2-isopropylmalate synthase (515 aa).

In terms of domain architecture, Pyruvate carboxyltransferase spans 4 to 266 (INIFDTTLRD…ETRLNLQEIK (263 aa)). 4 residues coordinate Mn(2+): Asp13, His201, His203, and Asn237. The segment at 391-515 (QLSSLQVQYG…RAENQKVAMQ (125 aa)) is regulatory domain.

Belongs to the alpha-IPM synthase/homocitrate synthase family. LeuA type 1 subfamily. Homodimer. Mn(2+) serves as cofactor.

The protein localises to the cytoplasm. It carries out the reaction 3-methyl-2-oxobutanoate + acetyl-CoA + H2O = (2S)-2-isopropylmalate + CoA + H(+). Its pathway is amino-acid biosynthesis; L-leucine biosynthesis; L-leucine from 3-methyl-2-oxobutanoate: step 1/4. Its function is as follows. Catalyzes the condensation of the acetyl group of acetyl-CoA with 3-methyl-2-oxobutanoate (2-ketoisovalerate) to form 3-carboxy-3-hydroxy-4-methylpentanoate (2-isopropylmalate). This is 2-isopropylmalate synthase from Geobacillus sp. (strain WCH70).